Reading from the N-terminus, the 61-residue chain is Short neurotoxin 4 (61 aa).

4 disulfides stabilise this stretch: Cys-3-Cys-23, Cys-17-Cys-40, Cys-42-Cys-53, and Cys-54-Cys-59.

It belongs to the three-finger toxin family. Short-chain subfamily. Type I alpha-neurotoxin sub-subfamily. Expressed by the venom gland.

It localises to the secreted. In terms of biological role, binds to muscle nicotinic acetylcholine receptor (nAChR) and inhibit acetylcholine from binding to the receptor, thereby impairing neuromuscular transmission. This Naja annulifera (Banded Egyptian cobra) protein is Short neurotoxin 4.